Here is a 177-residue protein sequence, read N- to C-terminus: Large ribosomal subunit protein uL10 (177 aa).

This sequence belongs to the universal ribosomal protein uL10 family. In terms of assembly, part of the ribosomal stalk of the 50S ribosomal subunit. The N-terminus interacts with L11 and the large rRNA to form the base of the stalk. The C-terminus forms an elongated spine to which L12 dimers bind in a sequential fashion forming a multimeric L10(L12)X complex.

Functionally, forms part of the ribosomal stalk, playing a central role in the interaction of the ribosome with GTP-bound translation factors. The protein is Large ribosomal subunit protein uL10 of Xanthomonas campestris pv. campestris (strain 8004).